A 974-amino-acid polypeptide reads, in one-letter code: Exocyst complex component 4 (974 aa).

Ala2 carries the post-translational modification N-acetylalanine. Lys9 carries the N6-acetyllysine modification. A phosphoserine mark is found at Ser32 and Ser226. Residues 32-114 (STSDDVEDRE…HCKRDELRKL (83 aa)) adopt a coiled-coil conformation. Residues Thr233 and Thr237 each carry the phosphothreonine modification. Ser468 is modified (phosphoserine).

Belongs to the SEC8 family. The exocyst complex is composed of EXOC1, EXOC2, EXOC3, EXOC4, EXOC5, EXOC6, EXOC7 and EXOC8. Interacts with BIRC6/bruce. Interacts with MYRIP. Interacts with SH3BP1; required for the localization of both SH3BP1 and the exocyst to the leading edge of migrating cells. Interacts with SLC6A9.

The protein resides in the midbody. It is found in the midbody ring. It localises to the cell projection. The protein localises to the cytoplasm. Its subcellular location is the cytoskeleton. The protein resides in the microtubule organizing center. It is found in the centrosome. In terms of biological role, component of the exocyst complex involved in the docking of exocytic vesicles with fusion sites on the plasma membrane. The protein is Exocyst complex component 4 (EXOC4) of Homo sapiens (Human).